Reading from the N-terminus, the 397-residue chain is Enoyl-[acyl-carrier-protein] reductase [NADH] (397 aa).

Residues 48-53, 74-75, 111-112, and 139-140 each bind NAD(+); these read GASTGY, FE, DA, and AA. Tyr-225 is a binding site for substrate. Tyr-235 (proton donor) is an active-site residue. Residues Lys-244 and 273 to 275 each bind NAD(+); that span reads VVT.

Belongs to the TER reductase family. As to quaternary structure, monomer.

The catalysed reaction is a 2,3-saturated acyl-[ACP] + NAD(+) = a (2E)-enoyl-[ACP] + NADH + H(+). It functions in the pathway lipid metabolism; fatty acid biosynthesis. Functionally, involved in the final reduction of the elongation cycle of fatty acid synthesis (FAS II). Catalyzes the reduction of a carbon-carbon double bond in an enoyl moiety that is covalently linked to an acyl carrier protein (ACP). The chain is Enoyl-[acyl-carrier-protein] reductase [NADH] from Burkholderia pseudomallei (strain 1710b).